Reading from the N-terminus, the 301-residue chain is MKWLQIHITVDQEQVEFTETLLMSLGAVSVTLDDAEDQALLEPLPGETPLWNKVIVTGIYQQDEQDPIDVDTLEAFLKAQLPDVPMRHEELEDQVWERAWMDYYEPIQIGEKFWIVPEWLEPPEADATNIKLDPGLAFGTGNHASTFLCLQWLGKTDVKDKIVIDYGCGSGILGVAALLLGAKKVYATDIDPQAVLATKQNAELNGVLDRLYVGLPEEFDQEFKPQQADVLVANILAGPLMALAPEFAKLLKSDGDFALAGVIEEQVADVSGVYSEFFDILDVEKREENWCRISGKRKTTN.

S-adenosyl-L-methionine is bound by residues T146, G167, D189, and N234.

It belongs to the methyltransferase superfamily. PrmA family.

It localises to the cytoplasm. It carries out the reaction L-lysyl-[protein] + 3 S-adenosyl-L-methionine = N(6),N(6),N(6)-trimethyl-L-lysyl-[protein] + 3 S-adenosyl-L-homocysteine + 3 H(+). Functionally, methylates ribosomal protein L11. This is Ribosomal protein L11 methyltransferase from Acinetobacter baumannii (strain AB307-0294).